A 100-amino-acid polypeptide reads, in one-letter code: Small ribosomal subunit protein uS14c (100 aa).

It belongs to the universal ribosomal protein uS14 family. As to quaternary structure, part of the 30S ribosomal subunit.

Its subcellular location is the plastid. The protein resides in the chloroplast. Binds 16S rRNA, required for the assembly of 30S particles. In Citrus sinensis (Sweet orange), this protein is Small ribosomal subunit protein uS14c.